Consider the following 339-residue polypeptide: tRNA N6-adenosine threonylcarbamoyltransferase (339 aa).

The Fe cation site is built by His111 and His115. Substrate contacts are provided by residues 134–138 (LVSGG), Asp167, Gly180, and Asn270. Asp298 is a Fe cation binding site.

The protein belongs to the KAE1 / TsaD family. Fe(2+) serves as cofactor.

The protein resides in the cytoplasm. It catalyses the reaction L-threonylcarbamoyladenylate + adenosine(37) in tRNA = N(6)-L-threonylcarbamoyladenosine(37) in tRNA + AMP + H(+). Functionally, required for the formation of a threonylcarbamoyl group on adenosine at position 37 (t(6)A37) in tRNAs that read codons beginning with adenine. Is involved in the transfer of the threonylcarbamoyl moiety of threonylcarbamoyl-AMP (TC-AMP) to the N6 group of A37, together with TsaE and TsaB. TsaD likely plays a direct catalytic role in this reaction. The chain is tRNA N6-adenosine threonylcarbamoyltransferase from Alkalilimnicola ehrlichii (strain ATCC BAA-1101 / DSM 17681 / MLHE-1).